Here is a 202-residue protein sequence, read N- to C-terminus: Histone chaperone ASF1B (202 aa).

Residues methionine 1–asparagine 156 are interaction with histone H3 and CHAF1B. Serine 198 is subject to Phosphoserine; by TLK2.

Belongs to the ASF1 family. As to quaternary structure, interacts with histone H3 (via C-terminus), including histone H3.1, H3.2 and H3.3, and histone H4; the interaction with H3 is direct. Interacts with the CHAF1A, CHAF1B and RBBP4 subunits of the CAF-1 complex. Interacts with HAT1, NASP and TAF1. Found in a soluble complex with NASP and histones H3 and H4; the interaction with NASP is probably indirect and mediated by H3-H4. Interacts with CDAN1. Found in a cytosolic complex with CDAN1, ASF1A, IPO4 and histones H3.1 and H4. Interacts with CREBBP. Phosphorylated by TLK2. Phosphorylated by TLK1. Highly expressed in germ cells. Restricted to premeiotic to meiotic stages during spermatogenesis.

Its subcellular location is the nucleus. The protein localises to the cytoplasm. It is found in the cytosol. Its function is as follows. Histone chaperone that facilitates histone deposition and histone exchange and removal during nucleosome assembly and disassembly. Cooperates with chromatin assembly factor 1 (CAF-1) to promote replication-dependent chromatin assembly. Also involved in the nuclear import of the histone H3-H4 dimer together with importin-4 (IPO4): specifically recognizes and binds newly synthesized histones with the monomethylation of H3 'Lys-9' (H3K9me1) and diacetylation at 'Lys-5' and 'Lys-12' of H4 (H4K5ac and H4K12ac) marks in the cytosol. Does not participate in replication-independent nucleosome deposition which is mediated by ASF1A and HIRA. Required for gonad development. The sequence is that of Histone chaperone ASF1B from Mus musculus (Mouse).